A 414-amino-acid chain; its full sequence is Arrestin domain-containing protein 3 (414 aa).

Short sequence motifs (PPxY motif) lie at residues 346–349 (PPSY) and 391–394 (PPLY). A disordered region spans residues 393–414 (LYSEIDPNPDQSADDRPSCPSR). Over residues 405–414 (ADDRPSCPSR) the composition is skewed to basic and acidic residues.

The protein belongs to the arrestin family. In terms of assembly, interacts (via PPxY motifs) with NEDD4 (via WW domains). Interacts with ADRB2. Interacts with ADRB3. Interacts with HGS (via PPxY motifs). Does not bind TXN (thioredoxin). Interacts with ITCH. Interacts with WWP1 (via WW domains). Highly expressed in skeletal muscle, placenta, kidney, lung, liver, blood, adrenal gland, lymph node, mammary gland, thyroid, and trachea. Very low levels in colon, thymus, spleen, small intestine, bladder and bone marrow. Strong expression in differentiated adipocytes compared to preadipocytes. Detected in omental fat and subcutaneous fat tissue.

It is found in the cytoplasm. The protein localises to the cell membrane. It localises to the lysosome. The protein resides in the endosome. Its subcellular location is the early endosome. Functionally, adapter protein that plays a role in regulating cell-surface expression of adrenergic receptors and probably also other G protein-coupled receptors. Plays a role in NEDD4-mediated ubiquitination and endocytosis af activated ADRB2 and subsequent ADRB2 degradation. May recruit NEDD4 to ADRB2. Alternatively, may function as adapter protein that does not play a major role in recruiting NEDD4 to ADRB2, but rather plays a role in a targeting ADRB2 to endosomes. This Homo sapiens (Human) protein is Arrestin domain-containing protein 3 (ARRDC3).